Here is a 1863-residue protein sequence, read N- to C-terminus: Transient receptor potential cation channel subfamily M member 7 (1863 aa).

At methionine 1 the chain carries N-acetylmethionine. Residues 1–850 (MSQKSWIEST…ITRKFYAFYH (850 aa)) lie on the Cytoplasmic side of the membrane. Serine 101 is modified (phosphoserine). The span at 544-555 (NRRSGRNTSSST) shows a compositional bias: low complexity. Residues 544-574 (NRRSGRNTSSSTPQLRKSHETFGNRADKKEK) form a disordered region. Residues 560-573 (KSHETFGNRADKKE) show a composition bias toward basic and acidic residues. A helical membrane pass occupies residues 851–876 (APIVKFWFNTLAYLGFLMLYTFVVLV). The Extracellular portion of the chain corresponds to 877–882 (KMEQLP). Residues 883-904 (SVQEWIVIAYIFTYAIEKVREV) traverse the membrane as a helical segment. At 905–923 (FMSEAGKISQKIKVWFSDY) the chain is on the cytoplasmic side. The chain crosses the membrane as a helical span at residues 924–943 (FNVSDTIAIISFFVGFGLRF). The Extracellular segment spans residues 944–956 (GAKWNYINAYDNH). A helical transmembrane segment spans residues 957-980 (VFVAGRLIYCLNIIFWYVRLLDFL). Residues 981 to 999 (AVNQQAGPYVMMIGKMVAN) are Cytoplasmic-facing. The helical transmembrane segment at 1000 to 1023 (MFYIVVIMALVLLSFGVPRKAILY) threads the bilayer. At 1024–1025 (PH) the chain is on the extracellular side. The pore-forming intramembrane region spans 1026-1066 (EEPSWSLAKDIVFHPYWMIFGEVYAYEIDVCANDSTLPTIC). Over 1067-1069 (GPG) the chain is Extracellular. A helical transmembrane segment spans residues 1070–1098 (TWLTPFLQAVYLFVQYIIMVNLLIAFFNN). Topologically, residues 1099 to 1863 (VYLQVKAISN…EATNSVRLML (765 aa)) are cytoplasmic. S-palmitoyl cysteine attachment occurs at residues cysteine 1143, cysteine 1144, and cysteine 1146. Threonine 1163 is modified (phosphothreonine). Phosphoserine occurs at positions 1191, 1193, 1224, 1255, and 1258. Residues 1198 to 1250 (RVTFERVEQMSIQIKEVGDRVNYIKRSLQSLDSQIGHLQDLSALTVDTLKTLT) adopt a coiled-coil conformation. Threonine 1265 carries the post-translational modification Phosphothreonine. A phosphoserine mark is found at serine 1300, serine 1357, serine 1360, serine 1385, serine 1386, serine 1389, serine 1394, serine 1395, and serine 1403. A disordered region spans residues 1380–1418 (NQKLGSSPNSSPHMSSPPTKFSVSTPSQPSCKSHLESTT). The segment covering 1385–1397 (SSPNSSPHMSSPP) has biased composition (low complexity). Residues 1398-1410 (TKFSVSTPSQPSC) are compositionally biased toward polar residues. A Phosphothreonine modification is found at threonine 1404. Phosphoserine is present on residues serine 1406 and serine 1445. The residue at position 1454 (threonine 1454) is a Phosphothreonine. Serine 1455 is modified (phosphoserine). A phosphothreonine mark is found at threonine 1466 and threonine 1470. 6 positions are modified to phosphoserine: serine 1491, serine 1498, serine 1502, serine 1511, serine 1525, and serine 1531. Positions 1498–1539 (SRRASTEDSPEVDSKAALLPDWLRDRPSNREMPSEGGTLNGL) are disordered. The segment covering 1519–1530 (WLRDRPSNREMP) has biased composition (basic and acidic residues). Residue threonine 1535 is modified to Phosphothreonine. Phosphoserine is present on serine 1541. Position 1549 is a phosphothreonine (threonine 1549). A phosphoserine mark is found at serine 1565 and serine 1567. Threonine 1581 carries the phosphothreonine modification. One can recognise an Alpha-type protein kinase domain in the interval 1592-1822 (ILNNSMSSWS…CCRKLKLPDL (231 aa)). Residues serine 1596 and serine 1613 each carry the phosphoserine modification. ADP-binding residues include glycine 1619, glycine 1620, leucine 1621, arginine 1622, and lysine 1646. Serine 1658 is subject to Phosphoserine. At threonine 1683 the chain carries Phosphothreonine. Positions 1718, 1719, and 1721 each coordinate ADP. A Zn(2+)-binding site is contributed by histidine 1751. The active-site Proton acceptor is aspartate 1765. An ADP-binding site is contributed by aspartate 1775. Position 1777 is a phosphoserine (serine 1777). Residues histidine 1808, cysteine 1810, and cysteine 1814 each contribute to the Zn(2+) site. The residue at position 1828 (threonine 1828) is a Phosphothreonine. Positions 1838–1863 (ESSDLNLQSGNSTKESEATNSVRLML) are disordered. The segment covering 1841 to 1863 (DLNLQSGNSTKESEATNSVRLML) has biased composition (polar residues). Phosphoserine occurs at positions 1846, 1849, and 1858.

In the C-terminal section; belongs to the protein kinase superfamily. Alpha-type protein kinase family. ALPK subfamily. It in the N-terminal section; belongs to the transient receptor (TC 1.A.4) family. LTrpC subfamily. TRPM7 sub-subfamily. Homodimer. Homotetramer. Forms heteromers with TRPM6; heteromeric channels are functionally different from the homomeric channels. Interacts with PLCB1. It depends on Zn(2+) as a cofactor. Palmitoylated; palmitoylation at Cys-1143, Cys-1144 and Cys-1146 promotes TRPM7 trafficking from the Golgi to the surface membrane. In terms of processing, autophosphorylated; autophosphorylation regulates TRPM7 kinase activity towards its substrates. Post-translationally, the C-terminal kinase domain can be cleaved from the channel segment in a cell-type-specific fashion. TRPM7 is cleaved by caspase-8, dissociating the kinase from the ion-conducting pore. The cleaved kinase fragments (M7CKs) can translocate to the cell nucleus and binds chromatin-remodeling complex proteins in a Zn(2+)-dependent manner to ultimately phosphorylate specific Ser/Thr residues of histones. As to expression, found to be expressed in brain and skeletal muscle, with stronger signals in kidney, heart, liver and spleen.

Its subcellular location is the cell membrane. The protein localises to the cytoplasmic vesicle membrane. The protein resides in the nucleus. It catalyses the reaction L-seryl-[protein] + ATP = O-phospho-L-seryl-[protein] + ADP + H(+). The catalysed reaction is L-threonyl-[protein] + ATP = O-phospho-L-threonyl-[protein] + ADP + H(+). It carries out the reaction Mg(2+)(in) = Mg(2+)(out). The enzyme catalyses Ca(2+)(in) = Ca(2+)(out). It catalyses the reaction Zn(2+)(in) = Zn(2+)(out). Its activity is regulated as follows. Channel displays constitutive activity. Channel activity is negatively regulated by cytosolic Mg(2+), Mg-ATP and low intracellular pH. Resting free cytosolic Mg(2+) and Mg-ATP concentrations seem to be sufficient to block native TRPM7 channel activity. TRPM7 channel activity is highly dependent on membrane levels of phosphatidylinositol 4,5 bisphosphate (PIP2). PIP2 hydrolysis negatively regulates TRPM7 channel activity. TRPM7 kinase activity does not affect channel activity. The kinase activity is controlled through the autophosphorylation of a serine/threonine-rich region located N-terminal to the catalytic domain. In terms of biological role, bifunctional protein that combines an ion channel with an intrinsic kinase domain, enabling it to modulate cellular functions either by conducting ions through the pore or by phosphorylating downstream proteins via its kinase domain. The channel is highly permeable to divalent cations, specifically calcium (Ca2+), magnesium (Mg2+) and zinc (Zn2+) and mediates their influx. Controls a wide range of biological processes such as Ca2(+), Mg(2+) and Zn(2+) homeostasis, vesicular Zn(2+) release channel and intracellular Ca(2+) signaling, embryonic development, immune responses, cell motility, proliferation and differentiation. The C-terminal alpha-kinase domain autophosphorylates cytoplasmic residues of TRPM7. TRPM7 phosphorylates SMAD2, suggesting that TRPM7 kinase may play a role in activating SMAD signaling pathways. In vitro, TRPM7 kinase phosphorylates ANXA1 (annexin A1), myosin II isoforms and a variety of proteins with diverse cellular functions. The cleaved channel exhibits substantially higher current and potentiates Fas receptor signaling. Functionally, the C-terminal kinase domain can be cleaved from the channel segment in a cell-type-specific fashion. In immune cells, the TRPM7 kinase domain is clipped from the channel domain by caspases in response to Fas-receptor stimulation. The cleaved kinase fragments can translocate to the nucleus, and bind chromatin-remodeling complex proteins in a Zn(2+)-dependent manner to ultimately phosphorylate specific Ser/Thr residues of histones known to be functionally important for cell differentiation and embryonic development. The chain is Transient receptor potential cation channel subfamily M member 7 (Trpm7) from Mus musculus (Mouse).